The chain runs to 217 residues: Somatotropin (217 aa).

A signal peptide spans 1-26 (MATGSHTTTLLLAVALLGLPWPQEAG). His-46 provides a ligand contact to Zn(2+). An intrachain disulfide couples Cys-79 to Cys-190. Glu-199 serves as a coordination point for Zn(2+). A disulfide bridge links Cys-207 with Cys-215.

This sequence belongs to the somatotropin/prolactin family.

It localises to the secreted. In terms of biological role, plays an important role in growth control. Its major role in stimulating body growth is to stimulate the liver and other tissues to secrete IGF1. It stimulates both the differentiation and proliferation of myoblasts. It also stimulates amino acid uptake and protein synthesis in muscle and other tissues. This Galago senegalensis (Northern lesser bushbaby) protein is Somatotropin (GH1).